The primary structure comprises 124 residues: Ribonuclease pancreatic A (124 aa).

The segment at 1–24 (AESSAMKFERQHVDSGGSSSSNAN) is disordered. Residues Lys-7 and Arg-10 each contribute to the substrate site. The Proton acceptor role is filled by His-12. Intrachain disulfides connect Cys-26–Cys-84, Cys-40–Cys-95, Cys-58–Cys-110, and Cys-65–Cys-72. Substrate-binding positions include 41-45 (KPVNT), Lys-66, and Arg-85. The active-site Proton donor is the His-119.

It belongs to the pancreatic ribonuclease family. As to expression, pancreas.

It localises to the secreted. The catalysed reaction is an [RNA] containing cytidine + H2O = an [RNA]-3'-cytidine-3'-phosphate + a 5'-hydroxy-ribonucleotide-3'-[RNA].. The enzyme catalyses an [RNA] containing uridine + H2O = an [RNA]-3'-uridine-3'-phosphate + a 5'-hydroxy-ribonucleotide-3'-[RNA].. This is Ribonuclease pancreatic A from Cavia porcellus (Guinea pig).